A 600-amino-acid chain; its full sequence is KIF-binding protein (600 aa).

Positions 384 to 434 (KAENEATEYSKIMQDYAEAYEHIAFFEENPENQAKMQKRRAKYLEDLLDLL) form a coiled coil.

This sequence belongs to the KIF-binding protein family.

Its subcellular location is the cytoplasm. The protein localises to the cytoskeleton. This Drosophila melanogaster (Fruit fly) protein is KIF-binding protein.